The following is a 599-amino-acid chain: MLRLLKRNIQISKRIVFTILKQKAFKGNHPCVPSVCTITYSRFHCLPDTLKSLLPMSSKTTLSMLPQVNIGANSFSAETPVDLKKENETELANISGPHKKSTSTSTRKRARSSKKKATDSVSDKIDESVASYDSSTHLRRSSRSKKPVNYNSSSESESEEQISKATKKVKQKEEEEYVEEVDEKSLKNESSSDEFEPVVPEQLETPISKRRRSRSSAKNLEKESTMNLDDHAPREMFDCLDKPIPWRGRLGYACLNTILRSMKERVFCSRTCRITTIQRDGLESVKQLGTQNVLDLIKLVEWNHNFGIHFMRVSSDLFPFASHAKYGYTLEFAQSHLEEVGKLANKYNHRLTMHPGQYTQIASPREVVVDSAIRDLAYHDEILSRMKLNEQLNKDAVLIIHLGGTFEGKKETLDRFRKNYQRLSDSVKARLVLENDDVSWSVQDLLPLCQELNIPLVLDWHHHNIVPGTLREGSLDLMPLIPTIRETWTRKGITQKQHYSESADPTAISGMKRRAHSDRVFDFPPCDPTMDLMIEAKEKEQAVFELCRRYELQNPPCPLEIMGPEYDQTRDGYYPPGAEKRLTARKRRSRKEEVEEDEK.

2 disordered regions span residues 89 to 224 and 561 to 599; these read TELA…EKES and IMGP…EDEK. The span at 97-115 shows a compositional bias: basic residues; that stretch reads PHKKSTSTSTRKRARSSKK. A compositionally biased stretch (basic and acidic residues) spans 116–127; it reads KATDSVSDKIDE. Residues 137–146 are compositionally biased toward basic residues; that stretch reads HLRRSSRSKK.

It belongs to the uve1/UvsE family.

Its function is as follows. Endonuclease for the repair of UV-irradiated DNA. Involved in the excision of cyclobutane pyrimidine dimers (CPD) and 6-4 pyrimidine pyrimidones (6-4PP) which forms the UV damage repair (UVDR) pathway. Also functions in oxidative damage repair in vivo. Provides back-up AP endonuclease activity to apn2 together with apn1. The chain is UV-damage endonuclease (uve1) from Schizosaccharomyces pombe (strain 972 / ATCC 24843) (Fission yeast).